Consider the following 471-residue polypeptide: Monocarboxylate transporter 11 (471 aa).

The span at 1–13 (MPAPQRKHRRGGF) shows a compositional bias: basic residues. Residues 1-31 (MPAPQRKHRRGGFSHRCFPTPQTAMTPQPAG) form a disordered region. At 1–35 (MPAPQRKHRRGGFSHRCFPTPQTAMTPQPAGPPDG) the chain is on the cytoplasmic side. A compositionally biased stretch (low complexity) spans 19–28 (PTPQTAMTPQ). The next 12 helical transmembrane spans lie at 36 to 56 (GWGW…YGLL), 78 to 98 (AWIS…GSAL), 106 to 126 (PVVM…AFAS), 131 to 151 (LYLG…APAL), 163 to 183 (VLAV…LAPA), 198 to 218 (LLLG…LPLV), 243 to 263 (AFSI…VPYV), 273 to 293 (GLGG…DAGA), 312 to 332 (LAVF…VPVV), 333 to 353 (GGEE…GLSA), 367 to 389 (LVGV…LGGL), and 407 to 427 (ASFL…IGLP). The Cytoplasmic portion of the chain corresponds to 428–471 (RALPSCGPASPPATPPPETGELLPAPQAVLLSPGGPGSTLDTTC).

This sequence belongs to the major facilitator superfamily. Monocarboxylate porter (TC 2.A.1.13) family. As to quaternary structure, interacts with isoform 2 of BSG. As to expression, expressed in liver, salivary gland and thyroid.

The protein localises to the endoplasmic reticulum membrane. It localises to the cell membrane. It carries out the reaction pyruvate(out) + H(+)(out) = pyruvate(in) + H(+)(in). Proton-linked monocarboxylate transporter. It catalyzes the transport of pyruvate across the plasma membrane. Probably involved in hepatic lipid metabolism: overexpression results in an increase of triacylglycerol(TAG) levels, small increases in intracellular diacylglycerols and decreases in lysophosphatidylcholine, cholesterol ester and sphingomyelin lipids. The sequence is that of Monocarboxylate transporter 11 (SLC16A11) from Homo sapiens (Human).